Consider the following 267-residue polypeptide: Ribosomal RNA small subunit methyltransferase J (267 aa).

S-adenosyl-L-methionine-binding positions include 133 to 134 and aspartate 187; that span reads ER.

It belongs to the methyltransferase superfamily. RsmJ family.

Its subcellular location is the cytoplasm. The enzyme catalyses guanosine(1516) in 16S rRNA + S-adenosyl-L-methionine = N(2)-methylguanosine(1516) in 16S rRNA + S-adenosyl-L-homocysteine + H(+). In terms of biological role, specifically methylates the guanosine in position 1516 of 16S rRNA. The polypeptide is Ribosomal RNA small subunit methyltransferase J (Halorhodospira halophila (strain DSM 244 / SL1) (Ectothiorhodospira halophila (strain DSM 244 / SL1))).